Reading from the N-terminus, the 503-residue chain is Probable cytosol aminopeptidase (503 aa).

Mn(2+)-binding residues include K268 and D273. K280 is an active-site residue. 3 residues coordinate Mn(2+): D291, D350, and E352. R354 is an active-site residue.

The protein belongs to the peptidase M17 family. The cofactor is Mn(2+).

Its subcellular location is the cytoplasm. The catalysed reaction is Release of an N-terminal amino acid, Xaa-|-Yaa-, in which Xaa is preferably Leu, but may be other amino acids including Pro although not Arg or Lys, and Yaa may be Pro. Amino acid amides and methyl esters are also readily hydrolyzed, but rates on arylamides are exceedingly low.. It carries out the reaction Release of an N-terminal amino acid, preferentially leucine, but not glutamic or aspartic acids.. Functionally, presumably involved in the processing and regular turnover of intracellular proteins. Catalyzes the removal of unsubstituted N-terminal amino acids from various peptides. The sequence is that of Probable cytosol aminopeptidase from Herminiimonas arsenicoxydans.